The primary structure comprises 428 residues: Dihydroorotase (428 aa).

Positions 59 and 61 each coordinate Zn(2+). Residues 61–63 and Asn-93 contribute to the substrate site; that span reads HLR. Zn(2+) is bound by residues Asp-151, His-178, and His-231. Asn-277 contacts substrate. Position 304 (Asp-304) interacts with Zn(2+). Asp-304 is an active-site residue. Residues His-308 and 322–323 each bind substrate; that span reads FG.

The protein belongs to the metallo-dependent hydrolases superfamily. DHOase family. Class I DHOase subfamily. It depends on Zn(2+) as a cofactor.

The enzyme catalyses (S)-dihydroorotate + H2O = N-carbamoyl-L-aspartate + H(+). The protein operates within pyrimidine metabolism; UMP biosynthesis via de novo pathway; (S)-dihydroorotate from bicarbonate: step 3/3. Catalyzes the reversible cyclization of carbamoyl aspartate to dihydroorotate. The protein is Dihydroorotase of Bacillus cereus (strain ZK / E33L).